Consider the following 399-residue polypeptide: Elongation factor Tu (399 aa).

The tr-type G domain maps to 10–209 (KPHVNIGTIG…EVDAYIPTPE (200 aa)). The interval 19–26 (GHVDHGKT) is G1. A GTP-binding site is contributed by 19 to 26 (GHVDHGKT). T26 is a Mg(2+) binding site. Residues 60–64 (GITIA) form a G2 region. Positions 81 to 84 (DCPG) are G3. GTP is bound by residues 81–85 (DCPGH) and 136–139 (NKQD). Residues 136-139 (NKQD) are G4. A G5 region spans residues 174 to 176 (SAL).

The protein belongs to the TRAFAC class translation factor GTPase superfamily. Classic translation factor GTPase family. EF-Tu/EF-1A subfamily. Monomer.

The protein localises to the cytoplasm. It catalyses the reaction GTP + H2O = GDP + phosphate + H(+). In terms of biological role, GTP hydrolase that promotes the GTP-dependent binding of aminoacyl-tRNA to the A-site of ribosomes during protein biosynthesis. This Helicobacter pylori (strain ATCC 700392 / 26695) (Campylobacter pylori) protein is Elongation factor Tu.